Consider the following 554-residue polypeptide: Germacrene A synthase (554 aa).

Mg(2+) contacts are provided by Asp306, Asp310, Thr453, and Glu457. The DDXXD motif motif lies at 306–310 (DDTYD).

This sequence belongs to the terpene synthase family. Mg(2+) is required as a cofactor.

The protein localises to the cytoplasm. It is found in the cytosol. The catalysed reaction is (2E,6E)-farnesyl diphosphate = (+)-(R)-germacrene A + diphosphate. It participates in secondary metabolite biosynthesis; terpenoid biosynthesis. Functionally, sesquiterpene synthase involved in germacrene A biosynthesis. Also produces additional sesquiterpene products, including 4,5-di-epi-aristolochene, eremophilene, alpha-selinene. This chain is Germacrene A synthase, found in Pogostemon cablin (Patchouli).